The chain runs to 644 residues: Phosphomethylpyrimidine synthase (644 aa).

Substrate is bound by residues Asn-236, Met-265, Tyr-294, His-330, 350–352 (SRG), 391–394 (DGLR), and Glu-430. His-434 lines the Zn(2+) pocket. A substrate-binding site is contributed by Tyr-457. A Zn(2+)-binding site is contributed by His-498. [4Fe-4S] cluster is bound by residues Cys-578, Cys-581, and Cys-586.

The protein belongs to the ThiC family. As to quaternary structure, homodimer. [4Fe-4S] cluster is required as a cofactor.

It catalyses the reaction 5-amino-1-(5-phospho-beta-D-ribosyl)imidazole + S-adenosyl-L-methionine = 4-amino-2-methyl-5-(phosphooxymethyl)pyrimidine + CO + 5'-deoxyadenosine + formate + L-methionine + 3 H(+). It functions in the pathway cofactor biosynthesis; thiamine diphosphate biosynthesis. In terms of biological role, catalyzes the synthesis of the hydroxymethylpyrimidine phosphate (HMP-P) moiety of thiamine from aminoimidazole ribotide (AIR) in a radical S-adenosyl-L-methionine (SAM)-dependent reaction. This is Phosphomethylpyrimidine synthase from Aliivibrio fischeri (strain ATCC 700601 / ES114) (Vibrio fischeri).